The sequence spans 220 residues: Deoxyribose-phosphate aldolase (220 aa).

The active-site Proton donor/acceptor is the Asp89. Catalysis depends on Lys151, which acts as the Schiff-base intermediate with acetaldehyde. The active-site Proton donor/acceptor is the Lys180.

This sequence belongs to the DeoC/FbaB aldolase family. DeoC type 1 subfamily.

It localises to the cytoplasm. It catalyses the reaction 2-deoxy-D-ribose 5-phosphate = D-glyceraldehyde 3-phosphate + acetaldehyde. It participates in carbohydrate degradation; 2-deoxy-D-ribose 1-phosphate degradation; D-glyceraldehyde 3-phosphate and acetaldehyde from 2-deoxy-alpha-D-ribose 1-phosphate: step 2/2. Catalyzes a reversible aldol reaction between acetaldehyde and D-glyceraldehyde 3-phosphate to generate 2-deoxy-D-ribose 5-phosphate. The polypeptide is Deoxyribose-phosphate aldolase (Streptococcus pneumoniae (strain CGSP14)).